Here is a 172-residue protein sequence, read N- to C-terminus: MPLLDSFTVDHTRMNAPAVRVAKTMQTPKGDTITVFDLRFTAPNKDILSEKGIHTLEHLYAGFMRNHLNGDSVEIIDISPMGCRTGFYMSLIGTPSEQQVADAWIAAMEDVLKVESQNKIPELNEYQCGTAAMHSLKEAQQIAKNILDAGVSVNKNDELALPESMLKELRID.

Residues H54, H58, and C128 each coordinate Fe cation.

The protein belongs to the LuxS family. As to quaternary structure, homodimer. Requires Fe cation as cofactor.

It carries out the reaction S-(5-deoxy-D-ribos-5-yl)-L-homocysteine = (S)-4,5-dihydroxypentane-2,3-dione + L-homocysteine. Involved in the synthesis of autoinducer 2 (AI-2) which is secreted by bacteria and is used to communicate both the cell density and the metabolic potential of the environment. The regulation of gene expression in response to changes in cell density is called quorum sensing. Catalyzes the transformation of S-ribosylhomocysteine (RHC) to homocysteine (HC) and 4,5-dihydroxy-2,3-pentadione (DPD). The chain is S-ribosylhomocysteine lyase from Vibrio alginolyticus.